A 232-amino-acid chain; its full sequence is Ribonuclease 3 (232 aa).

The RNase III domain maps to 9 to 131 (INLLQKKLGY…IIGGIFLDSN (123 aa)). Glu44 contributes to the Mg(2+) binding site. The active site involves Asp48. Residues Asp117 and Glu120 each coordinate Mg(2+). Residue Glu120 is part of the active site. Positions 158–228 (DPKTRLQEYL…AENALKFLIE (71 aa)) constitute a DRBM domain.

The protein belongs to the ribonuclease III family. In terms of assembly, homodimer. It depends on Mg(2+) as a cofactor.

It localises to the cytoplasm. The enzyme catalyses Endonucleolytic cleavage to 5'-phosphomonoester.. Digests double-stranded RNA. Involved in the processing of primary rRNA transcript to yield the immediate precursors to the large and small rRNAs (23S and 16S). Processes some mRNAs, and tRNAs when they are encoded in the rRNA operon. Processes pre-crRNA and tracrRNA of type II CRISPR loci if present in the organism. The chain is Ribonuclease 3 from Blochmanniella floridana.